A 1231-amino-acid polypeptide reads, in one-letter code: S-layer protein A (1231 aa).

The signal sequence occupies residues Met-1–Asp-35.

It belongs to the Sulfolobales SlaA family. In terms of assembly, the mushroom-shaped unit cells of the Sulfolobales' S-layers may consist of three SlaB subunits and six SlaA subunits.

Its subcellular location is the secreted. The protein resides in the cell wall. The protein localises to the S-layer. In terms of biological role, S-layer large protein. May form the highly ordered outer sheath. This chain is S-layer protein A, found in Saccharolobus solfataricus (strain ATCC 35092 / DSM 1617 / JCM 11322 / P2) (Sulfolobus solfataricus).